The following is a 178-amino-acid chain: dCTP deaminase (178 aa).

DCTP contacts are provided by residues 99–104 (RSTWAR) and Asp-115. Glu-125 (proton donor/acceptor) is an active-site residue. 2 residues coordinate dCTP: Tyr-157 and Gln-164.

Belongs to the dCTP deaminase family. Homotrimer.

It catalyses the reaction dCTP + H2O + H(+) = dUTP + NH4(+). Its pathway is pyrimidine metabolism; dUMP biosynthesis; dUMP from dCTP (dUTP route): step 1/2. In terms of biological role, catalyzes the deamination of dCTP to dUTP. This Aeropyrum pernix (strain ATCC 700893 / DSM 11879 / JCM 9820 / NBRC 100138 / K1) protein is dCTP deaminase.